Consider the following 854-residue polypeptide: DNA mismatch repair protein MutS (854 aa).

608-615 (GPNMAGKS) is an ATP binding site.

The protein belongs to the DNA mismatch repair MutS family.

Its function is as follows. This protein is involved in the repair of mismatches in DNA. It is possible that it carries out the mismatch recognition step. This protein has a weak ATPase activity. The protein is DNA mismatch repair protein MutS of Leuconostoc mesenteroides subsp. mesenteroides (strain ATCC 8293 / DSM 20343 / BCRC 11652 / CCM 1803 / JCM 6124 / NCDO 523 / NBRC 100496 / NCIMB 8023 / NCTC 12954 / NRRL B-1118 / 37Y).